A 292-amino-acid polypeptide reads, in one-letter code: Phosphatidylserine decarboxylase proenzyme (292 aa).

Active-site charge relay system; for autoendoproteolytic cleavage activity residues include Asp89, His146, and Ser252. Catalysis depends on Ser252, which acts as the Schiff-base intermediate with substrate; via pyruvic acid; for decarboxylase activity. Ser252 bears the Pyruvic acid (Ser); by autocatalysis mark.

This sequence belongs to the phosphatidylserine decarboxylase family. PSD-B subfamily. Prokaryotic type I sub-subfamily. Heterodimer of a large membrane-associated beta subunit and a small pyruvoyl-containing alpha subunit. It depends on pyruvate as a cofactor. Is synthesized initially as an inactive proenzyme. Formation of the active enzyme involves a self-maturation process in which the active site pyruvoyl group is generated from an internal serine residue via an autocatalytic post-translational modification. Two non-identical subunits are generated from the proenzyme in this reaction, and the pyruvate is formed at the N-terminus of the alpha chain, which is derived from the carboxyl end of the proenzyme. The autoendoproteolytic cleavage occurs by a canonical serine protease mechanism, in which the side chain hydroxyl group of the serine supplies its oxygen atom to form the C-terminus of the beta chain, while the remainder of the serine residue undergoes an oxidative deamination to produce ammonia and the pyruvoyl prosthetic group on the alpha chain. During this reaction, the Ser that is part of the protease active site of the proenzyme becomes the pyruvoyl prosthetic group, which constitutes an essential element of the active site of the mature decarboxylase.

The protein resides in the cell membrane. It catalyses the reaction a 1,2-diacyl-sn-glycero-3-phospho-L-serine + H(+) = a 1,2-diacyl-sn-glycero-3-phosphoethanolamine + CO2. It participates in phospholipid metabolism; phosphatidylethanolamine biosynthesis; phosphatidylethanolamine from CDP-diacylglycerol: step 2/2. Its function is as follows. Catalyzes the formation of phosphatidylethanolamine (PtdEtn) from phosphatidylserine (PtdSer). The sequence is that of Phosphatidylserine decarboxylase proenzyme from Shewanella sp. (strain MR-4).